The sequence spans 316 residues: N-acetyl-gamma-glutamyl-phosphate reductase (316 aa).

The active site involves C136.

The protein belongs to the NAGSA dehydrogenase family. Type 1 subfamily.

It is found in the cytoplasm. The catalysed reaction is N-acetyl-L-glutamate 5-semialdehyde + phosphate + NADP(+) = N-acetyl-L-glutamyl 5-phosphate + NADPH + H(+). The protein operates within amino-acid biosynthesis; L-arginine biosynthesis; N(2)-acetyl-L-ornithine from L-glutamate: step 3/4. Functionally, catalyzes the NADPH-dependent reduction of N-acetyl-5-glutamyl phosphate to yield N-acetyl-L-glutamate 5-semialdehyde. This is N-acetyl-gamma-glutamyl-phosphate reductase from Xanthomonas campestris pv. campestris (strain B100).